Here is a 251-residue protein sequence, read N- to C-terminus: Triosephosphate isomerase (251 aa).

Substrate is bound at residue 9-11 (NWK). The active-site Electrophile is the H96. Residue E168 is the Proton acceptor of the active site. Substrate-binding positions include G174, S214, and 235-236 (GG).

This sequence belongs to the triosephosphate isomerase family. In terms of assembly, homodimer.

It localises to the cytoplasm. The catalysed reaction is D-glyceraldehyde 3-phosphate = dihydroxyacetone phosphate. It participates in carbohydrate biosynthesis; gluconeogenesis. It functions in the pathway carbohydrate degradation; glycolysis; D-glyceraldehyde 3-phosphate from glycerone phosphate: step 1/1. Involved in the gluconeogenesis. Catalyzes stereospecifically the conversion of dihydroxyacetone phosphate (DHAP) to D-glyceraldehyde-3-phosphate (G3P). This chain is Triosephosphate isomerase, found in Porphyromonas gingivalis (strain ATCC BAA-308 / W83).